A 386-amino-acid chain; its full sequence is Glucose-1-phosphate adenylyltransferase (386 aa).

Alpha-D-glucose 1-phosphate contacts are provided by residues Tyr-100, Gly-165, 180 to 181, and Ser-191; that span reads EK.

This sequence belongs to the bacterial/plant glucose-1-phosphate adenylyltransferase family. In terms of assembly, homotetramer.

The enzyme catalyses alpha-D-glucose 1-phosphate + ATP + H(+) = ADP-alpha-D-glucose + diphosphate. Its pathway is glycan biosynthesis; glycogen biosynthesis. Its function is as follows. Involved in the biosynthesis of ADP-glucose, a building block required for the elongation reactions to produce glycogen. Catalyzes the reaction between ATP and alpha-D-glucose 1-phosphate (G1P) to produce pyrophosphate and ADP-Glc. The sequence is that of Glucose-1-phosphate adenylyltransferase from Clostridium beijerinckii (strain ATCC 51743 / NCIMB 8052) (Clostridium acetobutylicum).